We begin with the raw amino-acid sequence, 160 residues long: Protein max (160 aa).

Residues 1–13 (MSDNDDIEVESDE) show a composition bias toward acidic residues. The disordered stretch occupies residues 1–40 (MSDNDDIEVESDEEQPRFQSAADKRAHHNALERKRRDHIK). Residue S2 is modified to N-acetylserine. A phosphoserine mark is found at S2 and S11. One can recognise a bHLH domain in the interval 23–74 (DKRAHHNALERKRRDHIKDSFHSLRDSVPSLQGEKASRAQILDKATEYIQYM). Positions 29-40 (NALERKRRDHIK) are enriched in basic and acidic residues. The residue at position 66 (K66) is an N6-acetyllysine. Residues 81-102 (HQQDIDDLKRQNALLEQQVRAL) form a leucine-zipper region. Residues 103–160 (EKARSSAQLQTNYPSSDNSLYTNAKGSTISAFDGGSDSSSESEPEEPQSRKKLRMEAS) are disordered. S107 is modified (phosphoserine). The segment covering 107-132 (SSAQLQTNYPSSDNSLYTNAKGSTIS) has biased composition (polar residues). The short motif at 152 to 156 (RKKLR) is the Nuclear localization signal element. N6-acetyllysine is present on residues K153 and K154.

The protein belongs to the MAX family. As to quaternary structure, efficient DNA binding requires dimerization with another bHLH protein. Binds DNA as a heterodimer with MYC or MAD. Part of the E2F6.com-1 complex in G0 phase composed of E2F6, MGA, MAX, TFDP1, CBX3, BAT8, EUHMTASE1, RING1, RNF2, MBLR, L3MBTL2 and YAF2. Component of some MLL1/MLL complex, at least composed of the core components KMT2A/MLL1, ASH2L, HCFC1/HCF1, WDR5 and RBBP5, as well as the facultative components BACC1, CHD8, E2F6, HSP70, INO80C, KANSL1, LAS1L, MAX, MCRS1, MGA, MYST1/MOF, PELP1, PHF20, PRP31, RING2, RUVB1/TIP49A, RUVB2/TIP49B, SENP3, TAF1, TAF4, TAF6, TAF7, TAF9 and TEX10. Interacts with SPAG9. The heterodimer MYC:MAX interacts with ABI1; the interaction may enhance MYC:MAX transcriptional activity. Reversible lysine acetylation might regulate the nuclear-cytoplasmic shuttling of specific Max complexes. In terms of tissue distribution, high levels found in the brain, heart and lung while lower levels are seen in the liver, kidney and skeletal muscle.

The protein resides in the nucleus. It localises to the cell projection. The protein localises to the dendrite. Transcription regulator. Forms a sequence-specific DNA-binding protein complex with MYC or MAD which recognizes the core sequence 5'-CAC[GA]TG-3'. The MYC:MAX complex is a transcriptional activator, whereas the MAD:MAX complex is a repressor. May repress transcription via the recruitment of a chromatin remodeling complex containing H3 'Lys-9' histone methyltransferase activity. Represses MYC transcriptional activity from E-box elements. The chain is Protein max from Homo sapiens (Human).